The sequence spans 157 residues: SsrA-binding protein (157 aa).

It belongs to the SmpB family.

It localises to the cytoplasm. Its function is as follows. Required for rescue of stalled ribosomes mediated by trans-translation. Binds to transfer-messenger RNA (tmRNA), required for stable association of tmRNA with ribosomes. tmRNA and SmpB together mimic tRNA shape, replacing the anticodon stem-loop with SmpB. tmRNA is encoded by the ssrA gene; the 2 termini fold to resemble tRNA(Ala) and it encodes a 'tag peptide', a short internal open reading frame. During trans-translation Ala-aminoacylated tmRNA acts like a tRNA, entering the A-site of stalled ribosomes, displacing the stalled mRNA. The ribosome then switches to translate the ORF on the tmRNA; the nascent peptide is terminated with the 'tag peptide' encoded by the tmRNA and targeted for degradation. The ribosome is freed to recommence translation, which seems to be the essential function of trans-translation. The sequence is that of SsrA-binding protein from Methylobacterium nodulans (strain LMG 21967 / CNCM I-2342 / ORS 2060).